The primary structure comprises 105 residues: Large ribosomal subunit protein eL36 (105 aa).

Belongs to the eukaryotic ribosomal protein eL36 family. As to quaternary structure, component of the large ribosomal subunit.

The protein localises to the cytoplasm. It localises to the cytosol. Component of the large ribosomal subunit. The ribosome is a large ribonucleoprotein complex responsible for the synthesis of proteins in the cell. This Gallus gallus (Chicken) protein is Large ribosomal subunit protein eL36 (RPL36).